Reading from the N-terminus, the 220-residue chain is NADH-quinone oxidoreductase subunit B (220 aa).

Positions 37, 38, 103, and 132 each coordinate [4Fe-4S] cluster. The segment at 174-220 is disordered; the sequence is PSSERYAPKNRSQRKLAERQQAAQRREMGAEKPLGALEERAELNAGR. The span at 210–220 shows a compositional bias: basic and acidic residues; sequence LEERAELNAGR.

This sequence belongs to the complex I 20 kDa subunit family. As to quaternary structure, NDH-1 is composed of 14 different subunits. Subunits NuoB, C, D, E, F, and G constitute the peripheral sector of the complex. The cofactor is [4Fe-4S] cluster.

It is found in the cell membrane. It catalyses the reaction a quinone + NADH + 5 H(+)(in) = a quinol + NAD(+) + 4 H(+)(out). Functionally, NDH-1 shuttles electrons from NADH, via FMN and iron-sulfur (Fe-S) centers, to quinones in the respiratory chain. The immediate electron acceptor for the enzyme in this species is believed to be a menaquinone. Couples the redox reaction to proton translocation (for every two electrons transferred, four hydrogen ions are translocated across the cytoplasmic membrane), and thus conserves the redox energy in a proton gradient. The polypeptide is NADH-quinone oxidoreductase subunit B (Saccharopolyspora erythraea (strain ATCC 11635 / DSM 40517 / JCM 4748 / NBRC 13426 / NCIMB 8594 / NRRL 2338)).